Reading from the N-terminus, the 70-residue chain is Large ribosomal subunit protein bL31 (70 aa).

Positions 16, 18, 37, and 40 each coordinate Zn(2+).

The protein belongs to the bacterial ribosomal protein bL31 family. Type A subfamily. Part of the 50S ribosomal subunit. Requires Zn(2+) as cofactor.

In terms of biological role, binds the 23S rRNA. The chain is Large ribosomal subunit protein bL31 from Erwinia tasmaniensis (strain DSM 17950 / CFBP 7177 / CIP 109463 / NCPPB 4357 / Et1/99).